We begin with the raw amino-acid sequence, 349 residues long: Nicotinate-nucleotide--dimethylbenzimidazole phosphoribosyltransferase (349 aa).

Catalysis depends on Glu316, which acts as the Proton acceptor.

Belongs to the CobT family.

The catalysed reaction is 5,6-dimethylbenzimidazole + nicotinate beta-D-ribonucleotide = alpha-ribazole 5'-phosphate + nicotinate + H(+). It participates in nucleoside biosynthesis; alpha-ribazole biosynthesis; alpha-ribazole from 5,6-dimethylbenzimidazole: step 1/2. Catalyzes the synthesis of alpha-ribazole-5'-phosphate from nicotinate mononucleotide (NAMN) and 5,6-dimethylbenzimidazole (DMB). The protein is Nicotinate-nucleotide--dimethylbenzimidazole phosphoribosyltransferase of Photorhabdus laumondii subsp. laumondii (strain DSM 15139 / CIP 105565 / TT01) (Photorhabdus luminescens subsp. laumondii).